Consider the following 539-residue polypeptide: Phosphoenolpyruvate carboxykinase (ATP) (539 aa).

The substrate site is built by R64, Y206, and K212. ATP contacts are provided by residues K212, H231, and 247 to 255; that span reads GLSGTGKTT. 2 residues coordinate Mn(2+): K212 and H231. D268 contributes to the Mn(2+) binding site. ATP-binding positions include E296, R332, 448 to 449, and T454; that span reads RI. R332 contributes to the substrate binding site.

The protein belongs to the phosphoenolpyruvate carboxykinase (ATP) family. Monomer. Mn(2+) serves as cofactor.

The protein localises to the cytoplasm. The enzyme catalyses oxaloacetate + ATP = phosphoenolpyruvate + ADP + CO2. It participates in carbohydrate biosynthesis; gluconeogenesis. Functionally, involved in the gluconeogenesis. Catalyzes the conversion of oxaloacetate (OAA) to phosphoenolpyruvate (PEP) through direct phosphoryl transfer between the nucleoside triphosphate and OAA. This Pectobacterium carotovorum subsp. carotovorum (strain PC1) protein is Phosphoenolpyruvate carboxykinase (ATP).